A 523-amino-acid polypeptide reads, in one-letter code: GMP synthase [glutamine-hydrolyzing] (523 aa).

Positions 8-205 (KILILDFGSQ…VVNICGCETK (198 aa)) constitute a Glutamine amidotransferase type-1 domain. Cys85 (nucleophile) is an active-site residue. Residues His179 and Glu181 contribute to the active site. One can recognise a GMPS ATP-PPase domain in the interval 206-398 (WTAENIIEDA…LGLPAEMINR (193 aa)). Residue 233–239 (SGGVDSS) coordinates ATP.

As to quaternary structure, homodimer.

The enzyme catalyses XMP + L-glutamine + ATP + H2O = GMP + L-glutamate + AMP + diphosphate + 2 H(+). It functions in the pathway purine metabolism; GMP biosynthesis; GMP from XMP (L-Gln route): step 1/1. In terms of biological role, catalyzes the synthesis of GMP from XMP. This is GMP synthase [glutamine-hydrolyzing] from Haemophilus influenzae (strain PittGG).